The sequence spans 390 residues: MTAVSLGMPAVPPPPLASRRASRQIMVGPVPVGGGAPVSVQSMTTTLTADVNATLQQIAELTAAGCQIVRVAVPSQDDVEALPAIARKSQLPVIADIHFQPRYVFAAIEAGCAAVRVNPGNIRQFDDKVKEIAKAAGDAGVPIRIGVNAGSLDKRLLAKHGKATAEALVESALWECSLFEEHGFRDIKISVKHNDPVVMVRAYRQLAEACDYPLHLGVTEAGPAFQGTVKSAVAFGALLAEGIGDTIRVSLSAPPVEEIKVGTAILESLGLRERGLEIVSCPSCGRAQVDVYKLAEEVTAGLEGLPVPLRVAVMGCVVNGPGEAREADLGVASGNGKGQIFVKGKVIKTVPEGQIVETLIEEALRLADEMGAELPDELRSLVGGATVTVH.

The [4Fe-4S] cluster site is built by C281, C284, C316, and E323.

This sequence belongs to the IspG family. It depends on [4Fe-4S] cluster as a cofactor.

It catalyses the reaction (2E)-4-hydroxy-3-methylbut-2-enyl diphosphate + oxidized [flavodoxin] + H2O + 2 H(+) = 2-C-methyl-D-erythritol 2,4-cyclic diphosphate + reduced [flavodoxin]. The protein operates within isoprenoid biosynthesis; isopentenyl diphosphate biosynthesis via DXP pathway; isopentenyl diphosphate from 1-deoxy-D-xylulose 5-phosphate: step 5/6. Functionally, converts 2C-methyl-D-erythritol 2,4-cyclodiphosphate (ME-2,4cPP) into 1-hydroxy-2-methyl-2-(E)-butenyl 4-diphosphate. In Salinispora arenicola (strain CNS-205), this protein is 4-hydroxy-3-methylbut-2-en-1-yl diphosphate synthase (flavodoxin).